Reading from the N-terminus, the 85-residue chain is ATP synthase subunit 9, mitochondrial (85 aa).

The next 2 helical transmembrane spans lie at isoleucine 19–phenylalanine 39 and isoleucine 61–isoleucine 81.

This sequence belongs to the ATPase C chain family. In terms of assembly, F-type ATPases have 2 components, CF(1) - the catalytic core - and CF(0) - the membrane proton channel. CF(1) has five subunits: alpha(3), beta(3), gamma(1), delta(1), epsilon(1). CF(0) has three main subunits: a, b and c.

Its subcellular location is the mitochondrion membrane. In terms of biological role, this protein is one of the chains of the nonenzymatic membrane component (F0) of mitochondrial ATPase. This chain is ATP synthase subunit 9, mitochondrial (ATP9), found in Arabidopsis thaliana (Mouse-ear cress).